A 94-amino-acid polypeptide reads, in one-letter code: Small ribosomal subunit protein bS18 (94 aa).

The protein belongs to the bacterial ribosomal protein bS18 family. Part of the 30S ribosomal subunit. Forms a tight heterodimer with protein bS6.

Functionally, binds as a heterodimer with protein bS6 to the central domain of the 16S rRNA, where it helps stabilize the platform of the 30S subunit. The protein is Small ribosomal subunit protein bS18 of Polaromonas sp. (strain JS666 / ATCC BAA-500).